Consider the following 23-residue polypeptide: Coenzyme PQQ synthesis protein A (23 aa).

Positions 15–19 form a cross-link, pyrroloquinoline quinone (Glu-Tyr); that stretch reads EVTLY.

It belongs to the PqqA family.

It functions in the pathway cofactor biosynthesis; pyrroloquinoline quinone biosynthesis. In terms of biological role, required for coenzyme pyrroloquinoline quinone (PQQ) biosynthesis. PQQ is probably formed by cross-linking a specific glutamate to a specific tyrosine residue and excising these residues from the peptide. In Pseudomonas aeruginosa (strain UCBPP-PA14), this protein is Coenzyme PQQ synthesis protein A.